The primary structure comprises 730 residues: Wall-associated receptor kinase-like 3 (730 aa).

The signal sequence occupies residues 1 to 25 (MKTKTYNFRYIVASVLTLLMNGSSA). Residues 26-357 (ATPPNSNSSS…AKLAHVLRGV (332 aa)) are Extracellular-facing. N-linked (GlcNAc...) asparagine glycans are attached at residues Asn-32, Asn-38, Asn-68, Asn-90, Asn-119, Asn-132, Asn-212, Asn-233, and Asn-269. Residues 283–340 (CLCRYGYFSRMSYRSCYCGSGYRGNPYIRGGCIDIDECEVPNKCGEDTCVNMAGRYSC) form an atypical EGF-like region. 3 cysteine pairs are disulfide-bonded: Cys-285-Cys-298, Cys-320-Cys-331, and Cys-326-Cys-340. The chain crosses the membrane as a helical span at residues 358 to 378 (LIGLLGLLFFVIGIFGLYKFI). The Cytoplasmic segment spans residues 379–730 (RKRRRIIRSM…LMEINRIYDS (352 aa)). Residues 428–699 (FSIDRVLGQG…REVSIKLERI (272 aa)) form the Protein kinase domain. Residues 434-442 (LGQGGQGTV) and Lys-456 contribute to the ATP site. Asp-553 serves as the catalytic Proton acceptor. Residues 703-730 (PKDLDVHTENEEEEEEDQLMEINRIYDS) are disordered. A compositionally biased stretch (acidic residues) spans 712–721 (NEEEEEEDQL).

The protein belongs to the protein kinase superfamily. Ser/Thr protein kinase family. Preferentially expressed in roots and flowers.

The protein localises to the membrane. The catalysed reaction is L-seryl-[protein] + ATP = O-phospho-L-seryl-[protein] + ADP + H(+). The enzyme catalyses L-threonyl-[protein] + ATP = O-phospho-L-threonyl-[protein] + ADP + H(+). In terms of biological role, serine/threonine-protein kinase that may function as a signaling receptor of extracellular matrix component. This chain is Wall-associated receptor kinase-like 3 (WAKL3), found in Arabidopsis thaliana (Mouse-ear cress).